Reading from the N-terminus, the 228-residue chain is Peptide deformylase (228 aa).

2 disordered regions span residues 1-28 and 116-138; these read MSQD…EGAV and GVPK…EPDR. Polar residues-rich tracts occupy residues 8 to 18 and 123 to 133; these read TGCNTHSNTHS and NKQQANNSTSC. Residues Cys-141 and His-183 each contribute to the Fe cation site. Glu-184 is an active-site residue. His-187 contacts Fe cation.

The protein belongs to the polypeptide deformylase family. Fe(2+) serves as cofactor.

It carries out the reaction N-terminal N-formyl-L-methionyl-[peptide] + H2O = N-terminal L-methionyl-[peptide] + formate. Removes the formyl group from the N-terminal Met of newly synthesized proteins. Requires at least a dipeptide for an efficient rate of reaction. N-terminal L-methionine is a prerequisite for activity but the enzyme has broad specificity at other positions. In Tropheryma whipplei (strain Twist) (Whipple's bacillus), this protein is Peptide deformylase.